We begin with the raw amino-acid sequence, 172 residues long: Ribosome maturation factor RimM (172 aa).

The PRC barrel domain occupies 95 to 168 (DDGEFYYHEI…RVDVEILEGL (74 aa)).

This sequence belongs to the RimM family. In terms of assembly, binds ribosomal protein uS19.

It localises to the cytoplasm. In terms of biological role, an accessory protein needed during the final step in the assembly of 30S ribosomal subunit, possibly for assembly of the head region. Essential for efficient processing of 16S rRNA. May be needed both before and after RbfA during the maturation of 16S rRNA. It has affinity for free ribosomal 30S subunits but not for 70S ribosomes. This chain is Ribosome maturation factor RimM, found in Streptococcus pneumoniae (strain P1031).